We begin with the raw amino-acid sequence, 202 residues long: GTP cyclohydrolase 1 (202 aa).

Cys90, His93, and Cys163 together coordinate Zn(2+).

This sequence belongs to the GTP cyclohydrolase I family. As to quaternary structure, toroid-shaped homodecamer, composed of two pentamers of five dimers.

The catalysed reaction is GTP + H2O = 7,8-dihydroneopterin 3'-triphosphate + formate + H(+). Its pathway is cofactor biosynthesis; 7,8-dihydroneopterin triphosphate biosynthesis; 7,8-dihydroneopterin triphosphate from GTP: step 1/1. The protein is GTP cyclohydrolase 1 (folE) of Mycobacterium bovis (strain ATCC BAA-935 / AF2122/97).